A 205-amino-acid polypeptide reads, in one-letter code: Holliday junction branch migration complex subunit RuvA (205 aa).

The interval 1 to 64 is domain I; that stretch reads MIGRLRGTLA…EDAHLLYGFH (64 aa). Residues 65–143 form a domain II region; it reads EKRERELFRE…AWETSPAMFT (79 aa). Residues 144 to 153 are flexible linker; it reads LVSDGPVPVS. The segment at 154–205 is domain III; it reads GASTAEADAVSALVSLGYKPQEASKAVSAIKDKAGLSSEELIRRSLKGMITK.

Belongs to the RuvA family. Homotetramer. Forms an RuvA(8)-RuvB(12)-Holliday junction (HJ) complex. HJ DNA is sandwiched between 2 RuvA tetramers; dsDNA enters through RuvA and exits via RuvB. An RuvB hexamer assembles on each DNA strand where it exits the tetramer. Each RuvB hexamer is contacted by two RuvA subunits (via domain III) on 2 adjacent RuvB subunits; this complex drives branch migration. In the full resolvosome a probable DNA-RuvA(4)-RuvB(12)-RuvC(2) complex forms which resolves the HJ.

Its subcellular location is the cytoplasm. In terms of biological role, the RuvA-RuvB-RuvC complex processes Holliday junction (HJ) DNA during genetic recombination and DNA repair, while the RuvA-RuvB complex plays an important role in the rescue of blocked DNA replication forks via replication fork reversal (RFR). RuvA specifically binds to HJ cruciform DNA, conferring on it an open structure. The RuvB hexamer acts as an ATP-dependent pump, pulling dsDNA into and through the RuvAB complex. HJ branch migration allows RuvC to scan DNA until it finds its consensus sequence, where it cleaves and resolves the cruciform DNA. The sequence is that of Holliday junction branch migration complex subunit RuvA from Pseudomonas putida (strain W619).